The chain runs to 202 residues: NADH-ubiquinone oxidoreductase chain 6 (202 aa).

Helical transmembrane passes span 1 to 21 (MVTM…IMVI), 29 to 49 (SVFW…LLGV), 52 to 72 (IALM…LFVI), 96 to 116 (VPIG…SWLI), and 156 to 176 (YYLF…AIVL).

It belongs to the complex I subunit 6 family.

Its subcellular location is the mitochondrion membrane. It carries out the reaction a ubiquinone + NADH + 5 H(+)(in) = a ubiquinol + NAD(+) + 4 H(+)(out). Core subunit of the mitochondrial membrane respiratory chain NADH dehydrogenase (Complex I) that is believed to belong to the minimal assembly required for catalysis. Complex I functions in the transfer of electrons from NADH to the respiratory chain. The immediate electron acceptor for the enzyme is believed to be ubiquinone. The chain is NADH-ubiquinone oxidoreductase chain 6 (ND6) from Metridium senile (Brown sea anemone).